Reading from the N-terminus, the 718-residue chain is Polyphosphate kinase (718 aa).

Residue Asn-47 participates in ATP binding. 2 residues coordinate Mg(2+): Arg-372 and Arg-402. The Phosphohistidine intermediate role is filled by His-432. ATP is bound by residues Tyr-465, Arg-561, and His-589. A disordered region spans residues Lys-683–Asp-718. Residues Asp-709 to Asp-718 are compositionally biased toward acidic residues.

The protein belongs to the polyphosphate kinase 1 (PPK1) family. The cofactor is Mg(2+). In terms of processing, an intermediate of this reaction is the autophosphorylated ppk in which a phosphate is covalently linked to a histidine residue through a N-P bond.

The enzyme catalyses [phosphate](n) + ATP = [phosphate](n+1) + ADP. Its function is as follows. Catalyzes the reversible transfer of the terminal phosphate of ATP to form a long-chain polyphosphate (polyP). The chain is Polyphosphate kinase from Lactiplantibacillus plantarum (strain ATCC BAA-793 / NCIMB 8826 / WCFS1) (Lactobacillus plantarum).